We begin with the raw amino-acid sequence, 354 residues long: NADH-quinone oxidoreductase subunit H (354 aa).

Helical transmembrane passes span 22–42 (ILIR…YLIL), 91–111 (YLIA…VIPF), 124–144 (LLYV…AGWA), 168–188 (MGFA…SAIV), 203–223 (ILSW…ISGV), 255–275 (LFFL…ALMF), 291–311 (IPGF…FIWI), and 326–346 (LGWK…AIWI).

The protein belongs to the complex I subunit 1 family. In terms of assembly, NDH-1 is composed of 14 different subunits. Subunits NuoA, H, J, K, L, M, N constitute the membrane sector of the complex.

It localises to the cell inner membrane. The enzyme catalyses a quinone + NADH + 5 H(+)(in) = a quinol + NAD(+) + 4 H(+)(out). In terms of biological role, NDH-1 shuttles electrons from NADH, via FMN and iron-sulfur (Fe-S) centers, to quinones in the respiratory chain. The immediate electron acceptor for the enzyme in this species is believed to be ubiquinone. Couples the redox reaction to proton translocation (for every two electrons transferred, four hydrogen ions are translocated across the cytoplasmic membrane), and thus conserves the redox energy in a proton gradient. This subunit may bind ubiquinone. This is NADH-quinone oxidoreductase subunit H from Cupriavidus taiwanensis (strain DSM 17343 / BCRC 17206 / CCUG 44338 / CIP 107171 / LMG 19424 / R1) (Ralstonia taiwanensis (strain LMG 19424)).